The chain runs to 485 residues: NADH-quinone oxidoreductase subunit N (485 aa).

14 consecutive transmembrane segments (helical) span residues 8 to 28 (LIALLPLLIVGLTVVVVMLSI), 35 to 55 (FLNATLSVIGLNAALVSLWFV), 71 to 91 (GFAMLYTGLVLLASLATCTFA), 105 to 125 (FYLLVLIAALGGILLANANHL), 127 to 147 (SLFLGIELISLPLFGLVGYAF), 159 to 179 (YTILSAAASSFLLFGMALVYA), 203 to 223 (LLAGFGMMIVGLGFKLSLVPF), 235 to 255 (PAPVSTFLATASKIAIFGVVM), 271 to 291 (VVLAIIAFASIIFGNLMALSQ), 297 to 317 (LLGYSSISHLGYLLVALIALQ), 326 to 346 (VGGYLAGYLFSSLGAFGVVSL), 373 to 393 (AAVMTVMMLSLAGIPMTLGFI), 408 to 430 (WWLVGAVVVGSAIGLYYYLRVAV), and 455 to 475 (IVVLISALLVLVLGVWPQPLI).

The protein belongs to the complex I subunit 2 family. As to quaternary structure, NDH-1 is composed of 13 different subunits. Subunits NuoA, H, J, K, L, M, N constitute the membrane sector of the complex.

Its subcellular location is the cell inner membrane. The enzyme catalyses a quinone + NADH + 5 H(+)(in) = a quinol + NAD(+) + 4 H(+)(out). NDH-1 shuttles electrons from NADH, via FMN and iron-sulfur (Fe-S) centers, to quinones in the respiratory chain. The immediate electron acceptor for the enzyme in this species is believed to be ubiquinone. Couples the redox reaction to proton translocation (for every two electrons transferred, four hydrogen ions are translocated across the cytoplasmic membrane), and thus conserves the redox energy in a proton gradient. This chain is NADH-quinone oxidoreductase subunit N, found in Shigella boydii serotype 18 (strain CDC 3083-94 / BS512).